Reading from the N-terminus, the 331-residue chain is Aspartate carbamoyltransferase catalytic subunit (331 aa).

2 residues coordinate carbamoyl phosphate: arginine 66 and threonine 67. An L-aspartate-binding site is contributed by lysine 94. Residues arginine 116, histidine 149, and glutamine 152 each contribute to the carbamoyl phosphate site. 2 residues coordinate L-aspartate: arginine 189 and arginine 243. 2 residues coordinate carbamoyl phosphate: glycine 284 and proline 285.

Belongs to the aspartate/ornithine carbamoyltransferase superfamily. ATCase family. In terms of assembly, heterododecamer (2C3:3R2) of six catalytic PyrB chains organized as two trimers (C3), and six regulatory PyrI chains organized as three dimers (R2).

The catalysed reaction is carbamoyl phosphate + L-aspartate = N-carbamoyl-L-aspartate + phosphate + H(+). Its pathway is pyrimidine metabolism; UMP biosynthesis via de novo pathway; (S)-dihydroorotate from bicarbonate: step 2/3. In terms of biological role, catalyzes the condensation of carbamoyl phosphate and aspartate to form carbamoyl aspartate and inorganic phosphate, the committed step in the de novo pyrimidine nucleotide biosynthesis pathway. The chain is Aspartate carbamoyltransferase catalytic subunit from Thermosynechococcus vestitus (strain NIES-2133 / IAM M-273 / BP-1).